Consider the following 418-residue polypeptide: Probable serine/threonine-protein kinase nek2 (418 aa).

Residues 4–264 enclose the Protein kinase domain; the sequence is YEILGALGKG…VNELLGYSFI (261 aa). ATP contacts are provided by residues 10 to 18 and Lys33; that span reads LGKGSFGVV. Asp135 acts as the Proton acceptor in catalysis. The stretch at 278–363 forms a coiled coil; that stretch reads QGLKQMDEDL…SNLSLNCNNS (86 aa).

The protein belongs to the protein kinase superfamily. NEK Ser/Thr protein kinase family. NIMA subfamily.

The catalysed reaction is L-seryl-[protein] + ATP = O-phospho-L-seryl-[protein] + ADP + H(+). It catalyses the reaction L-threonyl-[protein] + ATP = O-phospho-L-threonyl-[protein] + ADP + H(+). Its function is as follows. Involved in centrosome biogenesis. Seems to be required for recruitment of centrosomal material and might be involved in de novo centrosome formation. This is Probable serine/threonine-protein kinase nek2 (nek2) from Dictyostelium discoideum (Social amoeba).